Consider the following 162-residue polypeptide: Protein A49 (162 aa).

It belongs to the poxviridae A49 protein family.

This chain is Protein A49, found in Homo sapiens (Human).